A 348-amino-acid polypeptide reads, in one-letter code: Spermidine/putrescine import ATP-binding protein PotA (348 aa).

Residues Ile-6–Ile-236 enclose the ABC transporter domain. Gly-38 to Thr-45 contributes to the ATP binding site.

It belongs to the ABC transporter superfamily. Spermidine/putrescine importer (TC 3.A.1.11.1) family. In terms of assembly, the complex is composed of two ATP-binding proteins (PotA), two transmembrane proteins (PotB and PotC) and a solute-binding protein (PotD).

It is found in the cell membrane. The catalysed reaction is ATP + H2O + polyamine-[polyamine-binding protein]Side 1 = ADP + phosphate + polyamineSide 2 + [polyamine-binding protein]Side 1.. In terms of biological role, part of the ABC transporter complex PotABCD involved in spermidine/putrescine import. Responsible for energy coupling to the transport system. The sequence is that of Spermidine/putrescine import ATP-binding protein PotA from Desulfitobacterium hafniense (strain Y51).